A 149-amino-acid polypeptide reads, in one-letter code: Protein SprT-like (149 aa).

One can recognise a SprT-like domain in the interval 6 to 147 (LQALVEQISI…VCGRCRSKLK (142 aa)). Histidine 67 provides a ligand contact to Zn(2+). The active site involves glutamate 68. Histidine 71 contacts Zn(2+).

It belongs to the SprT family. The cofactor is Zn(2+).

The protein resides in the cytoplasm. This Geobacillus kaustophilus (strain HTA426) protein is Protein SprT-like.